The sequence spans 102 residues: Small ribosomal subunit protein bS20 (102 aa).

It belongs to the bacterial ribosomal protein bS20 family.

Binds directly to 16S ribosomal RNA. The polypeptide is Small ribosomal subunit protein bS20 (Synechococcus sp. (strain WH7803)).